The primary structure comprises 161 residues: Cyclic pyranopterin monophosphate synthase (161 aa).

Substrate is bound by residues 75-77 (LCH) and 113-114 (ME). Residue Asp128 is part of the active site.

It belongs to the MoaC family. As to quaternary structure, homohexamer; trimer of dimers.

It catalyses the reaction (8S)-3',8-cyclo-7,8-dihydroguanosine 5'-triphosphate = cyclic pyranopterin phosphate + diphosphate. Its pathway is cofactor biosynthesis; molybdopterin biosynthesis. Functionally, catalyzes the conversion of (8S)-3',8-cyclo-7,8-dihydroguanosine 5'-triphosphate to cyclic pyranopterin monophosphate (cPMP). The sequence is that of Cyclic pyranopterin monophosphate synthase from Edwardsiella ictaluri (strain 93-146).